Here is a 52-residue protein sequence, read N- to C-terminus: Protein PROPEP890 (52 aa).

The segment at 27-52 (PQADLPQTPNSQVRIVSRDLPRGGNY) is disordered. Residues 31 to 40 (LPQTPNSQVR) show a composition bias toward polar residues. Residues 42-52 (VSRDLPRGGNY) show a composition bias toward basic and acidic residues.

In terms of tissue distribution, expressed in roots. Barely detected in flowers.

Functionally, produces a rapid alkalinization of the cellular media and the induction of defense-related genes, including chitinase 1b, chalcone synthase and CYP93A1. Not active in tobacco or Arabidopsis. The receptor for GmPep890 is probably different from the receptor for GmSubPep. The protein is Protein PROPEP890 (PROPEP890) of Glycine max (Soybean).